A 358-amino-acid polypeptide reads, in one-letter code: Phosphoserine aminotransferase (358 aa).

An L-glutamate-binding site is contributed by arginine 41. Residues 75–76 (AS), tryptophan 100, threonine 148, aspartate 167, and glutamine 190 each bind pyridoxal 5'-phosphate. Position 191 is an N6-(pyridoxal phosphate)lysine (lysine 191). Residue 233-234 (NT) participates in pyridoxal 5'-phosphate binding.

This sequence belongs to the class-V pyridoxal-phosphate-dependent aminotransferase family. SerC subfamily. In terms of assembly, homodimer. The cofactor is pyridoxal 5'-phosphate.

It localises to the cytoplasm. It carries out the reaction O-phospho-L-serine + 2-oxoglutarate = 3-phosphooxypyruvate + L-glutamate. The enzyme catalyses 4-(phosphooxy)-L-threonine + 2-oxoglutarate = (R)-3-hydroxy-2-oxo-4-phosphooxybutanoate + L-glutamate. It functions in the pathway amino-acid biosynthesis; L-serine biosynthesis; L-serine from 3-phospho-D-glycerate: step 2/3. It participates in cofactor biosynthesis; pyridoxine 5'-phosphate biosynthesis; pyridoxine 5'-phosphate from D-erythrose 4-phosphate: step 3/5. Catalyzes the reversible conversion of 3-phosphohydroxypyruvate to phosphoserine and of 3-hydroxy-2-oxo-4-phosphonooxybutanoate to phosphohydroxythreonine. This is Phosphoserine aminotransferase from Campylobacter jejuni subsp. jejuni serotype O:2 (strain ATCC 700819 / NCTC 11168).